We begin with the raw amino-acid sequence, 472 residues long: Homeobox protein PKNOX2 (472 aa).

The segment at 1-62 is disordered; the sequence is MMQHASPAPA…STPVPSAPID (62 aa). Over residues 26-38 the composition is skewed to polar residues; the sequence is DSPQMTATTQPPS. Residues 46 to 56 are compositionally biased toward low complexity; that stretch reads SAPSAAASTPV. An MEIS N-terminal domain is found at 96 to 179; sequence GSECITSASF…MHSDNLLRND (84 aa). A DNA-binding region (homeobox) is located at residues 291–350; the sequence is KRGVLPKHATNIMRSWLFQHLMHPYPTEDEKRQIAAQTNLTLLQVNNWFVNARRRILQPM. 3 disordered regions span residues 351-371, 386-405, and 423-472; these read LDASNPDPAPKAKKIKSQHRP, QQQGGAPGTNPDGSINLDNL, and AAHD…DSLV. Positions 361–371 are enriched in basic residues; it reads KAKKIKSQHRP. The segment covering 396-405 has biased composition (polar residues); it reads PDGSINLDNL. The segment covering 429-454 has biased composition (acidic residues); that stretch reads LDGTEEEDEDEMEEEEEEELEEEVDE.

It belongs to the TALE/MEIS homeobox family.

Its subcellular location is the nucleus. This chain is Homeobox protein PKNOX2 (PKNOX2), found in Pongo abelii (Sumatran orangutan).